The sequence spans 376 residues: uncharacterized protein (376 aa).

A helical membrane pass occupies residues phenylalanine 19–tyrosine 39.

This sequence to S.pombe SpAC5H10.12c.

The protein localises to the cytoplasm. It localises to the nucleus. Its subcellular location is the membrane. This is an uncharacterized protein from Schizosaccharomyces pombe (strain 972 / ATCC 24843) (Fission yeast).